The primary structure comprises 156 residues: Protein US1 (156 aa).

Disordered regions lie at residues Arg90–Asp114 and Ala133–Ser156. The segment covering Ala96 to Ser111 has biased composition (low complexity). Residues Ser147–Ser156 show a composition bias toward polar residues.

This Homo sapiens (Human) protein is Protein US1 (US1).